A 590-amino-acid polypeptide reads, in one-letter code: Aspartate--tRNA(Asp/Asn) ligase (590 aa).

Glu175 contributes to the L-aspartate binding site. Positions 199 to 202 are aspartate; the sequence is QQYK. Positions 221 and 450 each coordinate L-aspartate. Residue 221-223 participates in ATP binding; the sequence is RDE. Glu484 contacts ATP. Arg491 lines the L-aspartate pocket. 536–539 contacts ATP; the sequence is GVDR.

This sequence belongs to the class-II aminoacyl-tRNA synthetase family. Type 1 subfamily. As to quaternary structure, homodimer.

The protein resides in the cytoplasm. It carries out the reaction tRNA(Asx) + L-aspartate + ATP = L-aspartyl-tRNA(Asx) + AMP + diphosphate. In terms of biological role, aspartyl-tRNA synthetase with relaxed tRNA specificity since it is able to aspartylate not only its cognate tRNA(Asp) but also tRNA(Asn). Reaction proceeds in two steps: L-aspartate is first activated by ATP to form Asp-AMP and then transferred to the acceptor end of tRNA(Asp/Asn). This Bradyrhizobium sp. (strain BTAi1 / ATCC BAA-1182) protein is Aspartate--tRNA(Asp/Asn) ligase.